The sequence spans 126 residues: Urease subunit beta (126 aa).

It belongs to the urease beta subunit family. In terms of assembly, heterotrimer of UreA (gamma), UreB (beta) and UreC (alpha) subunits. Three heterotrimers associate to form the active enzyme.

The protein localises to the cytoplasm. The catalysed reaction is urea + 2 H2O + H(+) = hydrogencarbonate + 2 NH4(+). It functions in the pathway nitrogen metabolism; urea degradation; CO(2) and NH(3) from urea (urease route): step 1/1. In Frankia casuarinae (strain DSM 45818 / CECT 9043 / HFP020203 / CcI3), this protein is Urease subunit beta.